The primary structure comprises 359 residues: S-adenosylmethionine:tRNA ribosyltransferase-isomerase (359 aa).

It belongs to the QueA family. In terms of assembly, monomer.

It is found in the cytoplasm. The enzyme catalyses 7-aminomethyl-7-carbaguanosine(34) in tRNA + S-adenosyl-L-methionine = epoxyqueuosine(34) in tRNA + adenine + L-methionine + 2 H(+). The protein operates within tRNA modification; tRNA-queuosine biosynthesis. Transfers and isomerizes the ribose moiety from AdoMet to the 7-aminomethyl group of 7-deazaguanine (preQ1-tRNA) to give epoxyqueuosine (oQ-tRNA). In Alcanivorax borkumensis (strain ATCC 700651 / DSM 11573 / NCIMB 13689 / SK2), this protein is S-adenosylmethionine:tRNA ribosyltransferase-isomerase.